The sequence spans 478 residues: BUB3-interacting and GLEBS motif-containing protein ZNF207 (478 aa).

Residues 1–92 (MGRKKKKQLK…EGIPEKDMDE (92 aa)) form a microtubule-binding region region. 2 C2H2-type zinc fingers span residues 11–34 (PWCW…KAKH) and 35–58 (FKCH…MQVH). Residues 99–111 (QKTQESQKKKQQD) are compositionally biased toward basic and acidic residues. Disordered stretches follow at residues 99-157 (QKTQ…PGMP), 238-276 (APTA…SNSE), 300-362 (VGTD…ATSK), and 384-478 (RNLP…GGRY). Residues 112–121 (DSDEYDDDDS) are compositionally biased toward acidic residues. The span at 127–136 (FQPQPVQPQQ) shows a compositional bias: polar residues. A compositionally biased stretch (pro residues) spans 142-157 (MAQPGLPPVPGAPGMP). Low complexity-rich tracts occupy residues 267-276 (SSSTASSNSE), 310-362 (TPAT…ATSK), and 433-446 (QGMP…MPPY). The interval 359–391 (ATSKLIHPDEDISLEERRAQLPKYQRNLPRPGQ) is GLEBS. A compositionally biased stretch (pro residues) spans 447–467 (GQGPPMVPPYQGGPPRPPMGM).

Interacts (via GLEBS region) with BUB3. As to expression, ubiquitous.

Its subcellular location is the nucleus. The protein resides in the chromosome. It localises to the centromere. It is found in the kinetochore. The protein localises to the cytoplasm. Its subcellular location is the cytoskeleton. The protein resides in the spindle. Its function is as follows. Kinetochore- and microtubule-binding protein that plays a key role in spindle assembly. ZNF207/BuGZ is mainly composed of disordered low-complexity regions and undergoes phase transition or coacervation to form temperature-dependent liquid droplets. Coacervation promotes microtubule bundling and concentrates tubulin, promoting microtubule polymerization and assembly of spindle and spindle matrix by concentrating its building blocks. Also acts as a regulator of mitotic chromosome alignment by mediating the stability and kinetochore loading of BUB3. Mechanisms by which BUB3 is protected are unclear: according to a first report, ZNF207/BuGZ may act by blocking ubiquitination and proteasomal degradation of BUB3. According to another report, the stabilization is independent of the proteasome. This Homo sapiens (Human) protein is BUB3-interacting and GLEBS motif-containing protein ZNF207.